The chain runs to 100 residues: Aspartyl/glutamyl-tRNA(Asn/Gln) amidotransferase subunit C (100 aa).

The protein belongs to the GatC family. As to quaternary structure, heterotrimer of A, B and C subunits.

The catalysed reaction is L-glutamyl-tRNA(Gln) + L-glutamine + ATP + H2O = L-glutaminyl-tRNA(Gln) + L-glutamate + ADP + phosphate + H(+). It carries out the reaction L-aspartyl-tRNA(Asn) + L-glutamine + ATP + H2O = L-asparaginyl-tRNA(Asn) + L-glutamate + ADP + phosphate + 2 H(+). Its function is as follows. Allows the formation of correctly charged Asn-tRNA(Asn) or Gln-tRNA(Gln) through the transamidation of misacylated Asp-tRNA(Asn) or Glu-tRNA(Gln) in organisms which lack either or both of asparaginyl-tRNA or glutaminyl-tRNA synthetases. The reaction takes place in the presence of glutamine and ATP through an activated phospho-Asp-tRNA(Asn) or phospho-Glu-tRNA(Gln). The protein is Aspartyl/glutamyl-tRNA(Asn/Gln) amidotransferase subunit C of Streptococcus suis (strain 98HAH33).